The following is a 253-amino-acid chain: NADH-quinone oxidoreductase subunit C (253 aa).

Disordered regions lie at residues 1–33 (MSPDTPRGGDLHPPEPDAAATAGPEGTPPDTEP) and 234–253 (IPVEYKGARIPPPDERRAYS).

This sequence belongs to the complex I 30 kDa subunit family. As to quaternary structure, NDH-1 is composed of 14 different subunits. Subunits NuoB, C, D, E, F, and G constitute the peripheral sector of the complex.

The protein resides in the cell membrane. It catalyses the reaction a quinone + NADH + 5 H(+)(in) = a quinol + NAD(+) + 4 H(+)(out). Its function is as follows. NDH-1 shuttles electrons from NADH, via FMN and iron-sulfur (Fe-S) centers, to quinones in the respiratory chain. The immediate electron acceptor for the enzyme in this species is believed to be a menaquinone. Couples the redox reaction to proton translocation (for every two electrons transferred, four hydrogen ions are translocated across the cytoplasmic membrane), and thus conserves the redox energy in a proton gradient. The polypeptide is NADH-quinone oxidoreductase subunit C (Nocardia farcinica (strain IFM 10152)).